Here is a 373-residue protein sequence, read N- to C-terminus: Queuine tRNA-ribosyltransferase (373 aa).

The active-site Proton acceptor is the Asp-90. Residues 90 to 94 (DSGGF), Asp-144, Gln-193, and Gly-220 each bind substrate. Residues 251–257 (GVGTPED) are RNA binding. Asp-270 acts as the Nucleophile in catalysis. An RNA binding; important for wobble base 34 recognition region spans residues 275 to 279 (TRNAR). The Zn(2+) site is built by Cys-308, Cys-310, Cys-313, and His-339.

The protein belongs to the queuine tRNA-ribosyltransferase family. As to quaternary structure, homodimer. Within each dimer, one monomer is responsible for RNA recognition and catalysis, while the other monomer binds to the replacement base PreQ1. Zn(2+) is required as a cofactor.

The catalysed reaction is 7-aminomethyl-7-carbaguanine + guanosine(34) in tRNA = 7-aminomethyl-7-carbaguanosine(34) in tRNA + guanine. Its pathway is tRNA modification; tRNA-queuosine biosynthesis. Functionally, catalyzes the base-exchange of a guanine (G) residue with the queuine precursor 7-aminomethyl-7-deazaguanine (PreQ1) at position 34 (anticodon wobble position) in tRNAs with GU(N) anticodons (tRNA-Asp, -Asn, -His and -Tyr). Catalysis occurs through a double-displacement mechanism. The nucleophile active site attacks the C1' of nucleotide 34 to detach the guanine base from the RNA, forming a covalent enzyme-RNA intermediate. The proton acceptor active site deprotonates the incoming PreQ1, allowing a nucleophilic attack on the C1' of the ribose to form the product. After dissociation, two additional enzymatic reactions on the tRNA convert PreQ1 to queuine (Q), resulting in the hypermodified nucleoside queuosine (7-(((4,5-cis-dihydroxy-2-cyclopenten-1-yl)amino)methyl)-7-deazaguanosine). The sequence is that of Queuine tRNA-ribosyltransferase from Campylobacter jejuni subsp. jejuni serotype O:2 (strain ATCC 700819 / NCTC 11168).